The chain runs to 3124 residues: Collagen alpha-1(XII) chain (3124 aa).

The first 23 residues, 1-23 (MRTALCSAVAALCAAALLSSIEA), serve as a signal peptide directing secretion. The Fibronectin type-III 1 domain occupies 27–117 (PPSDLNFTII…GQLTIQTGGP (91 aa)). A glycan (N-linked (GlcNAc...) asparagine) is linked at asparagine 32. The 173-residue stretch at 139–311 (DLVFLVDGSW…DGIVDIQNEI (173 aa)) folds into the VWFA 1 domain. O-linked (Xyl...) (chondroitin sulfate) serine glycosylation occurs at serine 328. Residues 335-424 (PASNLVATQI…ITIMEKTQQV (90 aa)) enclose the Fibronectin type-III 2 domain. The VWFA 2 domain occupies 439-615 (DVVFLVDGSY…RISFELTQSV (177 aa)). 6 consecutive Fibronectin type-III domains span residues 633 to 722 (PAKN…LEVK), 724 to 815 (APRN…VRGN), 816 to 906 (PRNL…LEER), 908 to 998 (SPRN…VSQS), 999 to 1087 (ARTV…ASPF), and 1089 to 1179 (PPRN…TLSD). O-linked (Xyl...) (chondroitin sulfate) serine glycans are attached at residues serine 797, serine 890, and serine 981. Asparagine 1006, asparagine 1032, and asparagine 1044 each carry an N-linked (GlcNAc...) asparagine glycan. A disordered region spans residues 1075–1100 (KSRKAEGTTASPFKPPRNLRTSDSTM). The 173-residue stretch at 1199 to 1371 (DIVLLVDGSW…SFLASIGEDV (173 aa)) folds into the VWFA 3 domain. Fibronectin type-III domains are found at residues 1387-1476 (PPSN…YPLS), 1477-1568 (SVRN…LPLP), 1569-1659 (GPRG…VPSP), 1660-1756 (VNLR…TPAP), 1759-1853 (GPRN…TVKN), 1854-1939 (MLVY…LERG), 1940-2030 (TPRN…LPRS), 2031-2121 (GPRN…VGLL), 2122-2210 (PPQN…LYLN), and 2211-2299 (VTDL…LKPT). N-linked (GlcNAc...) asparagine glycosylation is present at asparagine 1512. Residue asparagine 1767 is glycosylated (N-linked (GlcNAc...) asparagine). N-linked (GlcNAc...) asparagine glycans are attached at residues asparagine 2210 and asparagine 2273. The region spanning 2327-2500 (DIVFLTDASW…DAFEKIQDNL (174 aa)) is the VWFA 4 domain. Residues 2455-2750 (SGFSVFVVGV…NACTCTQDSV (296 aa)) form a nonhelical region (NC3) region. The Laminin G-like domain maps to 2524 to 2716 (GFKMLESYNL…IQNFDIVCSP (193 aa)). Residues asparagine 2532 and asparagine 2683 are each glycosylated (N-linked (GlcNAc...) asparagine). Disordered regions lie at residues 2749–2900 (SVGP…GDRG) and 2935–3080 (PNDY…EGEP). 3 Collagen-like domains span residues 2751–2802 (GPPG…GPNG), 2807–2858 (GEPG…GPRG), and 2859–2900 (PPGP…GDRG). The triple-helical region (COL2) with 1 imperfection stretch occupies residues 2751–2902 (GPPGPPGPPG…KGEKGDRGDI (152 aa)). 2 stretches are compositionally biased toward pro residues: residues 2752-2761 (PPGPPGPPGG) and 2788-2798 (PPGPQGPPGPQ). Positions 2821 to 2830 (PGLPGRSGTP) are enriched in low complexity. Positions 2832–2841 (LPGPPGPVGP) are enriched in pro residues. Composition is skewed to low complexity over residues 2842–2854 (PGERGFTGKDGPT) and 2865–2878 (APGVPGVAGPSGKP). A Cell attachment site motif is present at residues 2899-2901 (RGD). The tract at residues 2903–2945 (ASQNMMRAVARQVCEQLINGQMSRFNQMLNQIPNDYYSNRNQP) is nonhelical region (NC2). Positions 2935 to 2944 (PNDYYSNRNQ) are enriched in polar residues. A compositionally biased stretch (pro residues) spans 2945 to 2954 (PGPPGPPGPP). Residues 2945 to 2994 (PGPPGPPGPPGAAGTRGEPGPGGRPGFPGPPGVQGPPGERGMPGEKGERG) enclose the Collagen-like 4 domain. The triple-helical region (COL1) with 2 imperfections stretch occupies residues 2946 to 3048 (GPPGPPGPPG…RGPPGPPGYC (103 aa)). Residues 2961 to 2970 (GEPGPGGRPG) are compositionally biased toward gly residues. Residues 3010-3024 (QGESRTGPPGSTGSR) are compositionally biased toward low complexity. The nonhelical region (NC1) stretch occupies residues 3049-3124 (DSSQCASIPY…SLSRKAKRKP (76 aa)).

This sequence belongs to the fibril-associated collagens with interrupted helices (FACIT) family. In terms of assembly, trimer of identical chains each containing 190 kDa of non-triple-helical sequences. The triple-helical tail is stabilized by disulfide bonds at each end. In terms of processing, prolines at the third position of the tripeptide repeating unit (G-X-Y) are hydroxylated in some or all of the chains. Post-translationally, O-glycosylated; glycosaminoglycan of chondroitin-sulfate type. Type XII collagen is present in tendons, ligaments, perichondrium, and periosteum, all dense connective tissues containing type I collagen.

Its subcellular location is the secreted. It localises to the extracellular space. The protein resides in the extracellular matrix. Functionally, type XII collagen interacts with type I collagen-containing fibrils, the COL1 domain could be associated with the surface of the fibrils, and the COL2 and NC3 domains may be localized in the perifibrillar matrix. The polypeptide is Collagen alpha-1(XII) chain (COL12A1) (Gallus gallus (Chicken)).